The sequence spans 424 residues: Zygote arrest protein 1 (424 aa).

Disordered stretches follow at residues 125-175 and 196-313; these read RTLQ…PMRF and GPGP…SPEL. Residues 141–150 show a composition bias toward gly residues; it reads GAEGTTGGGS. Basic and acidic residues predominate over residues 289–298; sequence RARDGGDGRE. A 3CxxC-type zinc finger spans residues 326-409; sequence KYGYYHCKDC…RQDLCGRCKG (84 aa).

Belongs to the ZAR1 family. In terms of assembly, interacts with YBX2. In terms of processing, ubiquitinated and degradaded by the proteasome during oocyte meiotic maturation, leading to MARDO (mitochondria-associated ribonucleoprotein domain) membraneless compartment dissolution. Ovary and testis.

The protein resides in the cytoplasm. The protein localises to the cytoplasmic ribonucleoprotein granule. MRNA-binding protein that mediates formation of MARDO (mitochondria-associated ribonucleoprotein domain), a membraneless compartment that stores maternal mRNAs in oocytes. MARDO assembly around mitochondria is directed by an increase in mitochondrial membrane potential during oocyte growth. Promotes formation of MARDO phase-separated membraneless compartment by undergoing liquid-liquid phase separation upon binding to maternal mRNAs. Binds to the 3'-UTR of maternal mRNAs. Maternal mRNAs stored in the MARDO are translationally repressed. Essential for female fertility and oocyte-to-embryo transition by coordinating maternal mRNA storage, translation and degradation. This Homo sapiens (Human) protein is Zygote arrest protein 1.